A 790-amino-acid polypeptide reads, in one-letter code: Probable copper-transporting ATPase SynA (790 aa).

Over 1-105 the chain is Cytoplasmic; it reads MPAAIVHSAD…IPPLQQQRLQ (105 aa). In terms of domain architecture, HMA spans 14 to 81; that stretch reads TSILVEVEGM…EITGLGFRAQ (68 aa). Cu(+) is bound by residues cysteine 25 and cysteine 28. The helical transmembrane segment at 106–127 threads the bilayer; it reads LAIAAFLLIVSSWGHLGHWLDH. Over 128–136 the chain is Extracellular; that stretch reads PLPGTDQLW. Residues 137–156 traverse the membrane as a helical segment; sequence FHALLATWALLGPGRSILQA. Topologically, residues 157–163 are cytoplasmic; sequence GWQGLRC. Residues 164-184 form a helical membrane-spanning segment; sequence GAPNMNSLVLLGTGSAYLASL. Topologically, residues 185–198 are extracellular; the sequence is VALLWPQLGWVCFF. The helical transmembrane segment at 199-219 threads the bilayer; the sequence is DEPVMLLGFILLGRTLEEQAR. Over 220–358 the chain is Cytoplasmic; the sequence is FRSQAALQNL…KAPVQRFADA (139 aa). Residues 359–381 form a helical membrane-spanning segment; sequence IAGRFVYGVCAIAALTFGFWATL. Topologically, residues 382–420 are extracellular; the sequence is GSRWWPQVLQQPLPGLLIHAPHHGMEMAHPHSHSPLLLA. A helical membrane pass occupies residues 421 to 438; it reads LTLAISVLVVACPCALGL. Topologically, residues 439 to 723 are cytoplasmic; that stretch reads ATPTAILVAT…NLSQMGLRTI (285 aa). Catalysis depends on aspartate 476, which acts as the 4-aspartylphosphate intermediate. Mg(2+)-binding residues include aspartate 669 and aspartate 673. The chain crosses the membrane as a helical span at residues 724-743; the sequence is RQNLTWALGYNVVMLPLAAG. At 744–755 the chain is on the extracellular side; it reads AFLPAYGLALTP. The chain crosses the membrane as a helical span at residues 756–774; it reads AIAGACMAVSSLAVVSNSL. The Cytoplasmic segment spans residues 775–790; it reads LLRYWFRRSLNHSVSV.

This sequence belongs to the cation transport ATPase (P-type) (TC 3.A.3) family. Type IB subfamily.

The protein resides in the cell membrane. It catalyses the reaction Cu(+)(in) + ATP + H2O = Cu(+)(out) + ADP + phosphate + H(+). Functionally, involved in copper transport. The chain is Probable copper-transporting ATPase SynA (synA) from Synechococcus elongatus (strain ATCC 33912 / PCC 7942 / FACHB-805) (Anacystis nidulans R2).